The sequence spans 359 residues: 4-hydroxy-3-methylbut-2-en-1-yl diphosphate synthase (flavodoxin) (359 aa).

Residues cysteine 264, cysteine 267, cysteine 299, and glutamate 306 each coordinate [4Fe-4S] cluster.

This sequence belongs to the IspG family. Requires [4Fe-4S] cluster as cofactor.

It catalyses the reaction (2E)-4-hydroxy-3-methylbut-2-enyl diphosphate + oxidized [flavodoxin] + H2O + 2 H(+) = 2-C-methyl-D-erythritol 2,4-cyclic diphosphate + reduced [flavodoxin]. The protein operates within isoprenoid biosynthesis; isopentenyl diphosphate biosynthesis via DXP pathway; isopentenyl diphosphate from 1-deoxy-D-xylulose 5-phosphate: step 5/6. Functionally, converts 2C-methyl-D-erythritol 2,4-cyclodiphosphate (ME-2,4cPP) into 1-hydroxy-2-methyl-2-(E)-butenyl 4-diphosphate. In Mycoplasmoides gallisepticum (strain R(low / passage 15 / clone 2)) (Mycoplasma gallisepticum), this protein is 4-hydroxy-3-methylbut-2-en-1-yl diphosphate synthase (flavodoxin).